The primary structure comprises 554 residues: Formate--tetrahydrofolate ligase (554 aa).

Residue 64-71 coordinates ATP; that stretch reads TPYGEGKT.

The protein belongs to the formate--tetrahydrofolate ligase family.

It carries out the reaction (6S)-5,6,7,8-tetrahydrofolate + formate + ATP = (6R)-10-formyltetrahydrofolate + ADP + phosphate. It participates in one-carbon metabolism; tetrahydrofolate interconversion. This is Formate--tetrahydrofolate ligase from Caldicellulosiruptor saccharolyticus (strain ATCC 43494 / DSM 8903 / Tp8T 6331).